A 276-amino-acid chain; its full sequence is Large ribosomal subunit protein uL2 (276 aa).

2 disordered regions span residues 1–20 (MGIK…TTND) and 219–276 (TVRG…RRKK). A compositionally biased stretch (polar residues) spans 7–20 (NPTTNGRRNMTTND).

This sequence belongs to the universal ribosomal protein uL2 family. As to quaternary structure, part of the 50S ribosomal subunit. Forms a bridge to the 30S subunit in the 70S ribosome.

Its function is as follows. One of the primary rRNA binding proteins. Required for association of the 30S and 50S subunits to form the 70S ribosome, for tRNA binding and peptide bond formation. It has been suggested to have peptidyltransferase activity; this is somewhat controversial. Makes several contacts with the 16S rRNA in the 70S ribosome. The sequence is that of Large ribosomal subunit protein uL2 from Bacillus cereus (strain Q1).